We begin with the raw amino-acid sequence, 198 residues long: Cytochrome c oxidase assembly protein CtaG (198 aa).

Residues methionine 1–arginine 12 are Cytoplasmic-facing. The helical; Signal-anchor for type II membrane protein transmembrane segment at serine 13–alanine 35 threads the bilayer. At valine 36–leucine 198 the chain is on the periplasmic side.

The protein belongs to the COX11/CtaG family.

The protein localises to the cell inner membrane. Functionally, exerts its effect at some terminal stage of cytochrome c oxidase synthesis, probably by being involved in the insertion of the copper B into subunit I. The protein is Cytochrome c oxidase assembly protein CtaG of Sinorhizobium medicae (strain WSM419) (Ensifer medicae).